Reading from the N-terminus, the 251-residue chain is Long tail fiber protein Gp37 (251 aa).

Positions 134–137 (DVYI) are interaction with the receptor-recognizing protein gp38. The 99-residue stretch at 139-237 (SDGRLKINKK…EEIKELKTPF (99 aa)) folds into the Peptidase S74 domain.

This sequence belongs to the S16-like long tail fiber protein Gp37 family. As to quaternary structure, homotrimer. Interacts with the receptor-recognizing protein Gp38. Post-translationally, proteolytic cleavage and release of the chaperone in the host cytosol stabilizes the folded protein.

It is found in the virion. In terms of biological role, constitues the trimeric tip of the long tail fiber that mediates the attachment to the host receptor, together with the receptor-recognizing protein Gp38. Functionally, the C-terminal chaperone protein mediates homotrimerization and proper folding of the catalytic trimer. This Escherichia coli (Bacteriophage Ox2) protein is Long tail fiber protein Gp37 (37).